The sequence spans 262 residues: Ribosomal RNA small subunit methyltransferase A (262 aa).

Residues histidine 13, leucine 15, glycine 40, glutamate 61, aspartate 85, and asparagine 103 each contribute to the S-adenosyl-L-methionine site.

Belongs to the class I-like SAM-binding methyltransferase superfamily. rRNA adenine N(6)-methyltransferase family. RsmA subfamily.

Its subcellular location is the cytoplasm. The enzyme catalyses adenosine(1518)/adenosine(1519) in 16S rRNA + 4 S-adenosyl-L-methionine = N(6)-dimethyladenosine(1518)/N(6)-dimethyladenosine(1519) in 16S rRNA + 4 S-adenosyl-L-homocysteine + 4 H(+). In terms of biological role, specifically dimethylates two adjacent adenosines (A1518 and A1519) in the loop of a conserved hairpin near the 3'-end of 16S rRNA in the 30S particle. May play a critical role in biogenesis of 30S subunits. This chain is Ribosomal RNA small subunit methyltransferase A, found in Bordetella avium (strain 197N).